Reading from the N-terminus, the 243-residue chain is Carboxy-S-adenosyl-L-methionine synthase (243 aa).

S-adenosyl-L-methionine contacts are provided by residues Tyr-39, Gly-64–Ser-66, Asn-132, and Arg-199.

This sequence belongs to the class I-like SAM-binding methyltransferase superfamily. Cx-SAM synthase family. Homodimer.

The catalysed reaction is prephenate + S-adenosyl-L-methionine = carboxy-S-adenosyl-L-methionine + 3-phenylpyruvate + H2O. Functionally, catalyzes the conversion of S-adenosyl-L-methionine (SAM) to carboxy-S-adenosyl-L-methionine (Cx-SAM). The sequence is that of Carboxy-S-adenosyl-L-methionine synthase from Alteromonas mediterranea (strain DSM 17117 / CIP 110805 / LMG 28347 / Deep ecotype).